Here is a 253-residue protein sequence, read N- to C-terminus: MTKPHDFKTKAIIVRKTKCGEADRILSLLTPDLGLIQGFAKSVRKTKSKLSGHLELLCYSEVSLARGKAIDTITGSQTIQSFLNIRNSLQLSAMAFYACELAYHFSPEEAANPAMFQLLLSTLEELDNGSQPELCLKYFEINLLASSGYKPELRECANCHKKLQATINYYSPESGGVICPNCRNTQIGMPVSVNTVKVLRYIQENSFSSICRLKINREILSELELAIRANIRFVLEKEPKALLWLDSLRLADL.

It belongs to the RecO family.

In terms of biological role, involved in DNA repair and RecF pathway recombination. This Dehalococcoides mccartyi (strain CBDB1) protein is DNA repair protein RecO.